The following is a 165-amino-acid chain: Large ribosomal subunit protein uL5 (165 aa).

The protein belongs to the universal ribosomal protein uL5 family. Part of the 50S ribosomal subunit; contacts the 5S rRNA and probably tRNA. Forms a bridge to the 30S subunit in the 70S ribosome.

Its function is as follows. This is one of the proteins that bind and probably mediate the attachment of the 5S RNA into the large ribosomal subunit, where it forms part of the central protuberance. In the 70S ribosome it contacts protein S13 of the 30S subunit (bridge B1b), connecting the 2 subunits; this bridge is implicated in subunit movement. May contact the P site tRNA; the 5S rRNA and some of its associated proteins might help stabilize positioning of ribosome-bound tRNAs. The polypeptide is Large ribosomal subunit protein uL5 (Methanosarcina acetivorans (strain ATCC 35395 / DSM 2834 / JCM 12185 / C2A)).